The primary structure comprises 122 residues: UPF0102 protein BARBAKC583_1042 (122 aa).

This sequence belongs to the UPF0102 family.

The protein is UPF0102 protein BARBAKC583_1042 of Bartonella bacilliformis (strain ATCC 35685 / KC583 / Herrer 020/F12,63).